We begin with the raw amino-acid sequence, 868 residues long: Probable inorganic carbon transporter subunit DabA (868 aa).

Residues cysteine 392, aspartate 394, histidine 574, and cysteine 589 each contribute to the Zn(2+) site.

It belongs to the inorganic carbon transporter (TC 9.A.2) DabA family. As to quaternary structure, forms a complex with DabB. Zn(2+) is required as a cofactor.

It localises to the cell membrane. Its function is as follows. Part of an energy-coupled inorganic carbon pump. The polypeptide is Probable inorganic carbon transporter subunit DabA (Bacillus cereus (strain G9842)).